The following is a 270-amino-acid chain: Orotidine 5'-phosphate decarboxylase (270 aa).

The Proton donor role is filled by Lys89.

Belongs to the OMP decarboxylase family. Type 2 subfamily.

The enzyme catalyses orotidine 5'-phosphate + H(+) = UMP + CO2. It participates in pyrimidine metabolism; UMP biosynthesis via de novo pathway; UMP from orotate: step 2/2. This is Orotidine 5'-phosphate decarboxylase from Dehalococcoides mccartyi (strain ATCC BAA-2266 / KCTC 15142 / 195) (Dehalococcoides ethenogenes (strain 195)).